The chain runs to 186 residues: Peptidyl-tRNA hydrolase (186 aa).

Residue Y16 coordinates tRNA. H21 serves as the catalytic Proton acceptor. TRNA contacts are provided by Y66, N68, and N114.

This sequence belongs to the PTH family. Monomer.

It is found in the cytoplasm. It carries out the reaction an N-acyl-L-alpha-aminoacyl-tRNA + H2O = an N-acyl-L-amino acid + a tRNA + H(+). Functionally, hydrolyzes ribosome-free peptidyl-tRNAs (with 1 or more amino acids incorporated), which drop off the ribosome during protein synthesis, or as a result of ribosome stalling. Catalyzes the release of premature peptidyl moieties from peptidyl-tRNA molecules trapped in stalled 50S ribosomal subunits, and thus maintains levels of free tRNAs and 50S ribosomes. This is Peptidyl-tRNA hydrolase from Ureaplasma parvum serovar 3 (strain ATCC 700970).